A 73-amino-acid chain; its full sequence is Translation initiation factor IF-1 (73 aa).

In terms of domain architecture, S1-like spans Met1 to Arg73.

It belongs to the IF-1 family. As to quaternary structure, component of the 30S ribosomal translation pre-initiation complex which assembles on the 30S ribosome in the order IF-2 and IF-3, IF-1 and N-formylmethionyl-tRNA(fMet); mRNA recruitment can occur at any time during PIC assembly.

It is found in the cytoplasm. In terms of biological role, one of the essential components for the initiation of protein synthesis. Stabilizes the binding of IF-2 and IF-3 on the 30S subunit to which N-formylmethionyl-tRNA(fMet) subsequently binds. Helps modulate mRNA selection, yielding the 30S pre-initiation complex (PIC). Upon addition of the 50S ribosomal subunit IF-1, IF-2 and IF-3 are released leaving the mature 70S translation initiation complex. This is Translation initiation factor IF-1 from Chlamydia abortus (strain DSM 27085 / S26/3) (Chlamydophila abortus).